Here is a 679-residue protein sequence, read N- to C-terminus: NADPH--cytochrome P450 reductase (679 aa).

Over 1–21 the chain is Lumenal; it reads MADSHGDTGATMPEAAAQEAS. The chain crosses the membrane as a helical span at residues 22–42; the sequence is VFSMTDVVLFSLIVGLITYWF. The Cytoplasmic segment spans residues 43 to 679; that stretch reads LFRKKKEEVP…KGRYSLDVWS (637 aa). Serine 64 carries the phosphoserine modification. The 145-residue stretch at 81 to 225 folds into the Flavodoxin-like domain; that stretch reads IVVFYGSQTG…DFITWREQFW (145 aa). Residues 87 to 92, 139 to 142, 174 to 183, and aspartate 209 each bind FMN; these read SQTGTA, ATYG, and LGNKTYEHFN. In terms of domain architecture, FAD-binding FR-type spans 280-522; sequence KNPFLATVTT…FVRKSQFRLP (243 aa). Arginine 299 contacts NADP(+). Residues arginine 425, 455 to 458, 473 to 475, tyrosine 479, and 489 to 492 each bind FAD; these read RYYS, CAV, and GVAT. NADP(+) is bound by residues threonine 536, 597–598, 603–607, and aspartate 640; these read SR and KVYVQ. FAD is bound at residue tryptophan 678.

It belongs to the NADPH--cytochrome P450 reductase family. This sequence in the N-terminal section; belongs to the flavodoxin family. In the C-terminal section; belongs to the flavoprotein pyridine nucleotide cytochrome reductase family. FAD is required as a cofactor. FMN serves as cofactor.

Its subcellular location is the endoplasmic reticulum membrane. The enzyme catalyses 2 oxidized [cytochrome P450] + NADPH = 2 reduced [cytochrome P450] + NADP(+) + H(+). This enzyme is required for electron transfer from NADP to cytochrome P450 in microsomes. It can also provide electron transfer to heme oxygenase and cytochrome B5. This Oryctolagus cuniculus (Rabbit) protein is NADPH--cytochrome P450 reductase.